Consider the following 135-residue polypeptide: Galectin-1 (135 aa).

Residue A2 is modified to N-acetylalanine. The 132-residue stretch at 4–135 (GLVASNLNLK…DFKIKCVAFE (132 aa)) folds into the Galectin domain. N6-acetyllysine occurs at positions 13 and 29. Residue S30 is modified to Phosphoserine. Residues 45-49 (HFNPR), H53, N62, and 69-72 (WGAE) contribute to the a beta-D-galactoside site. K108 is subject to N6-acetyllysine; alternate. An N6-succinyllysine; alternate modification is found at K108. K128 carries the N6-acetyllysine modification.

As to quaternary structure, homodimer. Binds LGALS3BP. Interacts with CD2, CD3, CD4, CD6, CD7, CD43, ALCAM and CD45. Interacts with laminin (via poly-N-acetyllactosamine). Interacts with SUSD2. Interacts with cargo receptor TMED10; the interaction mediates the translocation from the cytoplasm into the ERGIC (endoplasmic reticulum-Golgi intermediate compartment) and thereby secretion.

The protein localises to the secreted. It is found in the extracellular space. The protein resides in the extracellular matrix. Its subcellular location is the cytoplasm. In terms of biological role, lectin that binds beta-galactoside and a wide array of complex carbohydrates. Plays a role in regulating apoptosis, cell proliferation and cell differentiation. Inhibits CD45 protein phosphatase activity and therefore the dephosphorylation of Lyn kinase. Strong inducer of T-cell apoptosis. This is Galectin-1 (LGALS1) from Bos taurus (Bovine).